The following is a 318-amino-acid chain: Deoxymugineic acid synthase 1 (318 aa).

Residue Asp-48 coordinates NADP(+). Tyr-53 serves as the catalytic Proton donor. His-116 is a substrate binding site. NADP(+) is bound by residues 162-163 (CN), Gln-184, 262-270 (FDEARMREN), and 277-285 (ELTEEERQR).

The protein belongs to the aldo/keto reductase family. In terms of tissue distribution, confined to cells participating in long distance transport (e.g. in the parts of pericycle cells adjacent to the protoxylem and metaxylem) in roots and to vascular bundles in shoots.

It carries out the reaction 2'-deoxymugineate + NAD(+) = 3''-deamino-3''-oxonicotianamine + NADH + H(+). The catalysed reaction is 2'-deoxymugineate + NADP(+) = 3''-deamino-3''-oxonicotianamine + NADPH + H(+). It functions in the pathway siderophore biosynthesis. In terms of biological role, catalyzes the reduction of a 3''-keto intermediate during the biosynthesis of 2'-deoxymugineic acid (DMA) from L-Met. Involved in the formation of phytosiderophores (MAs) belonging to the mugineic acid family and required to acquire iron. The chain is Deoxymugineic acid synthase 1 from Oryza sativa subsp. japonica (Rice).